The primary structure comprises 386 residues: S-adenosylmethionine:tRNA ribosyltransferase-isomerase (386 aa).

The protein belongs to the QueA family. In terms of assembly, monomer.

The protein localises to the cytoplasm. The catalysed reaction is 7-aminomethyl-7-carbaguanosine(34) in tRNA + S-adenosyl-L-methionine = epoxyqueuosine(34) in tRNA + adenine + L-methionine + 2 H(+). It functions in the pathway tRNA modification; tRNA-queuosine biosynthesis. Functionally, transfers and isomerizes the ribose moiety from AdoMet to the 7-aminomethyl group of 7-deazaguanine (preQ1-tRNA) to give epoxyqueuosine (oQ-tRNA). In Rickettsia canadensis (strain McKiel), this protein is S-adenosylmethionine:tRNA ribosyltransferase-isomerase.